The following is a 705-amino-acid chain: Calpastatin (705 aa).

2 disordered regions span residues 1 to 211 (MNPT…PNDA) and 226 to 493 (LTTC…PLPP). Composition is skewed to basic and acidic residues over residues 7–17 (KAVKTEPEKKP) and 24–62 (VVHE…EKAV). Lys-10 participates in a covalent cross-link: Glycyl lysine isopeptide (Lys-Gly) (interchain with G-Cter in SUMO2). Residue Lys-28 is modified to N6-acetyllysine. 2 stretches are compositionally biased toward low complexity: residues 63-72 (SKSSEQPPSE) and 94-103 (PAAAAAASAE). Ser-65 carries the phosphoserine modification. Thr-115 bears the Phosphothreonine mark. Over residues 135–151 (TALDDLIDTLGEPEEMK) the composition is skewed to acidic residues. An Inhibitory domain 1 repeat occupies 149–202 (EMKEDNTTYTGPEVSDPMSSTYIEELGKRESTPPPKYKELLNKEEGIAGPPPDS). Basic and acidic residues predominate over residues 173–194 (ELGKRESTPPPKYKELLNKEEG). Phosphoserine is present on residues Ser-202 and Ser-230. The span at 234–248 (DGKETEKEKSTEEAL) shows a compositional bias: basic and acidic residues. Residues 275–286 (TEQALQALSASL) show a composition bias toward polar residues. Composition is skewed to basic and acidic residues over residues 289–317 (RKPE…KKCG) and 327–352 (YRLK…KPLS). An Inhibitory domain 2 repeat occupies 292 to 344 (EPELDPSSIREVDEAKAKEEKVKKCGEDEETVPSEYRLKPATDKDGKPLLPEA). Ser-352, Ser-354, and Ser-361 each carry phosphoserine. Positions 355–364 (ELIDELSEDF) are enriched in acidic residues. Positions 365–381 (DQSKPTEKQSKPTEKTE) are enriched in basic and acidic residues. Ser-428 is modified (phosphoserine). Residues 430–489 (PKKEADPEDGKPVEDKVKEKAKEEDRENFGEKEETIPPDYRLEEAKDKDGKPLLPKEVKE) show a composition bias toward basic and acidic residues. An Inhibitory domain 3 repeat occupies 434-487 (ADPEDGKPVEDKVKEKAKEEDRENFGEKEETIPPDYRLEEAKDKDGKPLLPKEV). Phosphoserine is present on residues Ser-504 and Ser-515. The interval 527 to 705 (VSEVVSQTPA…KPKADGKSTS (179 aa)) is disordered. Positions 533-542 (QTPAPTTQAA) are enriched in low complexity. Ser-563 carries the post-translational modification Phosphoserine. The stretch at 571-624 (PDPDENKPVEDKVKEKAKAEHRDKLGERDDTIPPKYQHLLDDNKEGTPGKPKDQ) is one Inhibitory domain 4 repeat. The segment covering 571–625 (PDPDENKPVEDKVKEKAKAEHRDKLGERDDTIPPKYQHLLDDNKEGTPGKPKDQR) has biased composition (basic and acidic residues). Over residues 651–662 (DSCPSTTETSTD) the composition is skewed to low complexity. Residues 683–705 (KAKDSTKAKEETSKPKADGKSTS) are compositionally biased toward basic and acidic residues.

The protein belongs to the protease inhibitor I27 (calpastatin) family.

Specific inhibition of calpain (calcium-dependent cysteine protease). Plays a key role in postmortem tenderization of meat and have been proposed to be involved in muscle protein degradation in living tissue. The chain is Calpastatin (CAST) from Bos taurus (Bovine).